The primary structure comprises 285 residues: Bifunctional protein FolD (285 aa).

Residues 165 to 167 (GRS) and S190 each bind NADP(+).

This sequence belongs to the tetrahydrofolate dehydrogenase/cyclohydrolase family. In terms of assembly, homodimer.

It carries out the reaction (6R)-5,10-methylene-5,6,7,8-tetrahydrofolate + NADP(+) = (6R)-5,10-methenyltetrahydrofolate + NADPH. It catalyses the reaction (6R)-5,10-methenyltetrahydrofolate + H2O = (6R)-10-formyltetrahydrofolate + H(+). The protein operates within one-carbon metabolism; tetrahydrofolate interconversion. In terms of biological role, catalyzes the oxidation of 5,10-methylenetetrahydrofolate to 5,10-methenyltetrahydrofolate and then the hydrolysis of 5,10-methenyltetrahydrofolate to 10-formyltetrahydrofolate. The sequence is that of Bifunctional protein FolD from Streptococcus pneumoniae serotype 4 (strain ATCC BAA-334 / TIGR4).